Reading from the N-terminus, the 182-residue chain is Nuclear cap-binding protein subunit 2 (182 aa).

MRNA is bound by residues tyrosine 13, tyrosine 35, 104-108 (RADLD), 115-119 (RQYGR), and 125-126 (QV). The RRM domain occupies 32–110 (NCVYVGNLSF…RIIRADLDHG (79 aa)). The segment at 114–182 (GRQYGRGASG…NPRYNRWKKN (69 aa)) is disordered. The segment covering 126–136 (VRDEMREEFDP) has biased composition (basic and acidic residues). The span at 145–175 (RQPTSSRQLANYSGISSAPLGSSLELQSNPR) shows a compositional bias: polar residues.

It belongs to the RRM NCBP2 family. In terms of assembly, component of the nuclear cap-binding complex (CBC), a heterodimer composed of cbc1 and cbc2 that interacts with capped RNAs.

It localises to the cytoplasm. The protein localises to the perinuclear region. It is found in the nucleus. In terms of biological role, component of the CBC complex, which binds co-transcriptionally to the 5' cap of pre-mRNAs and is involved in maturation, export and degradation of nuclear mRNAs. The chain is Nuclear cap-binding protein subunit 2 (cbc2) from Schizosaccharomyces pombe (strain 972 / ATCC 24843) (Fission yeast).